Consider the following 548-residue polypeptide: Chaperonin GroEL (548 aa).

ATP contacts are provided by residues threonine 30–proline 33, lysine 51, aspartate 87–threonine 91, glycine 415, asparagine 479–alanine 481, and aspartate 495. Residues arginine 526–methionine 548 form a disordered region. The segment covering glycine 539 to methionine 548 has biased composition (gly residues).

This sequence belongs to the chaperonin (HSP60) family. In terms of assembly, forms a cylinder of 14 subunits composed of two heptameric rings stacked back-to-back. Interacts with the co-chaperonin GroES.

It is found in the cytoplasm. It carries out the reaction ATP + H2O + a folded polypeptide = ADP + phosphate + an unfolded polypeptide.. Functionally, together with its co-chaperonin GroES, plays an essential role in assisting protein folding. The GroEL-GroES system forms a nano-cage that allows encapsulation of the non-native substrate proteins and provides a physical environment optimized to promote and accelerate protein folding. The sequence is that of Chaperonin GroEL from Buchnera aphidicola subsp. Schizaphis graminum (strain Sg).